A 35-amino-acid polypeptide reads, in one-letter code: SKEVMKQMTINFAKPMEACKQELNVPDAVVQDFFN.

This sequence belongs to the PBP/GOBP family. Homodimer. In terms of tissue distribution, antenna.

Functionally, this major soluble protein in olfactory sensilla of male moths might serve to solubilize the extremely hydrophobic pheromone molecules and to transport pheromone through the aqueous lymph to receptors located on olfactory cilia. In Lymantria dispar (Gypsy moth), this protein is Pheromone-binding protein 1.